A 252-amino-acid chain; its full sequence is uncharacterized protein (252 aa).

The signal sequence occupies residues 1-20; the sequence is MIATLGNLIIPVIFVNYVAS.

The protein belongs to the ascovirus HvAV ORF17 family.

This is an uncharacterized protein from Spodoptera frugiperda ascovirus 1a (SfAV-1a).